The following is a 360-amino-acid chain: Mediator of RNA polymerase II transcription subunit 6 (360 aa).

2 disordered regions span residues 186-238 and 316-360; these read PAQP…NDPL and AAAA…PGAA. Low complexity-rich tracts occupy residues 190–205 and 316–325; these read SAGA…YTAS and AAAAAANANA.

It belongs to the Mediator complex subunit 6 family. As to quaternary structure, component of the Mediator complex.

Its subcellular location is the nucleus. In terms of biological role, component of the Mediator complex, a coactivator involved in the regulated transcription of nearly all RNA polymerase II-dependent genes. Mediator functions as a bridge to convey information from gene-specific regulatory proteins to the basal RNA polymerase II transcription machinery. Mediator is recruited to promoters by direct interactions with regulatory proteins and serves as a scaffold for the assembly of a functional preinitiation complex with RNA polymerase II and the general transcription factors. This is Mediator of RNA polymerase II transcription subunit 6 (med-6) from Neurospora crassa (strain ATCC 24698 / 74-OR23-1A / CBS 708.71 / DSM 1257 / FGSC 987).